The sequence spans 230 residues: Large ribosomal subunit protein uL1 (230 aa).

The protein belongs to the universal ribosomal protein uL1 family. In terms of assembly, part of the 50S ribosomal subunit.

In terms of biological role, binds directly to 23S rRNA. The L1 stalk is quite mobile in the ribosome, and is involved in E site tRNA release. Functionally, protein L1 is also a translational repressor protein, it controls the translation of the L11 operon by binding to its mRNA. The protein is Large ribosomal subunit protein uL1 of Methylobacillus flagellatus (strain ATCC 51484 / DSM 6875 / VKM B-1610 / KT).